We begin with the raw amino-acid sequence, 33 residues long: KWKVFKKIEKVGRNIRDGIVKAGPAIAVLGQAN.

Lys21 carries the 5-hydroxylysine modification.

As to quaternary structure, monomer. As to expression, hemolymph.

It localises to the secreted. Functionally, cecropins have lytic and antibacterial activity against several Gram-positive and Gram-negative bacteria. Also has activity against fungi. In Heliothis virescens (Tobacco budworm moth), this protein is Cecropin-B.